The following is a 483-amino-acid chain: Aspartyl/glutamyl-tRNA(Asn/Gln) amidotransferase subunit B (483 aa).

Belongs to the GatB/GatE family. GatB subfamily. In terms of assembly, heterotrimer of A, B and C subunits.

The enzyme catalyses L-glutamyl-tRNA(Gln) + L-glutamine + ATP + H2O = L-glutaminyl-tRNA(Gln) + L-glutamate + ADP + phosphate + H(+). The catalysed reaction is L-aspartyl-tRNA(Asn) + L-glutamine + ATP + H2O = L-asparaginyl-tRNA(Asn) + L-glutamate + ADP + phosphate + 2 H(+). In terms of biological role, allows the formation of correctly charged Asn-tRNA(Asn) or Gln-tRNA(Gln) through the transamidation of misacylated Asp-tRNA(Asn) or Glu-tRNA(Gln) in organisms which lack either or both of asparaginyl-tRNA or glutaminyl-tRNA synthetases. The reaction takes place in the presence of glutamine and ATP through an activated phospho-Asp-tRNA(Asn) or phospho-Glu-tRNA(Gln). The polypeptide is Aspartyl/glutamyl-tRNA(Asn/Gln) amidotransferase subunit B (Granulibacter bethesdensis (strain ATCC BAA-1260 / CGDNIH1)).